We begin with the raw amino-acid sequence, 154 residues long: Ribosome maturation factor RimP (154 aa).

The protein belongs to the RimP family.

It localises to the cytoplasm. In terms of biological role, required for maturation of 30S ribosomal subunits. This Hydrogenobaculum sp. (strain Y04AAS1) protein is Ribosome maturation factor RimP.